Reading from the N-terminus, the 134-residue chain is Prefoldin subunit alpha (134 aa).

It belongs to the prefoldin subunit alpha family. Heterohexamer of two alpha and four beta subunits.

The protein localises to the cytoplasm. Its function is as follows. Molecular chaperone capable of stabilizing a range of proteins. Seems to fulfill an ATP-independent, HSP70-like function in archaeal de novo protein folding. The chain is Prefoldin subunit alpha from Pyrobaculum calidifontis (strain DSM 21063 / JCM 11548 / VA1).